A 147-amino-acid polypeptide reads, in one-letter code: MSIQRTFVMIKPDGVRRNLIGEIISRFEKRGLKIIGLKMVKIDRPTAERLYEEHKGKSFFEELISYITSGPVVCMVIEGDEAVSVVRKMIGNTDPKEAPPGTIRGDYALSKAENVIHASDSEEKAKREMSIFFKEEELVTPLAQVHM.

6 residues coordinate ATP: Lys-11, Phe-59, Arg-87, Thr-93, Arg-104, and Asn-114. His-117 functions as the Pros-phosphohistidine intermediate in the catalytic mechanism.

It belongs to the NDK family. Requires Mg(2+) as cofactor.

It is found in the cytoplasm. The catalysed reaction is a 2'-deoxyribonucleoside 5'-diphosphate + ATP = a 2'-deoxyribonucleoside 5'-triphosphate + ADP. The enzyme catalyses a ribonucleoside 5'-diphosphate + ATP = a ribonucleoside 5'-triphosphate + ADP. Major role in the synthesis of nucleoside triphosphates other than ATP. The ATP gamma phosphate is transferred to the NDP beta phosphate via a ping-pong mechanism, using a phosphorylated active-site intermediate. The chain is Nucleoside diphosphate kinase from Sulfurisphaera tokodaii (strain DSM 16993 / JCM 10545 / NBRC 100140 / 7) (Sulfolobus tokodaii).